The following is a 139-amino-acid chain: NADPH-dependent 7-cyano-7-deazaguanine reductase (139 aa).

Catalysis depends on Cys-34, which acts as the Thioimide intermediate. Catalysis depends on Asp-41, which acts as the Proton donor. Residues 56 to 58 (IEL) and 75 to 76 (HE) contribute to the substrate site.

This sequence belongs to the GTP cyclohydrolase I family. QueF type 1 subfamily.

The protein resides in the cytoplasm. It catalyses the reaction 7-aminomethyl-7-carbaguanine + 2 NADP(+) = 7-cyano-7-deazaguanine + 2 NADPH + 3 H(+). It participates in tRNA modification; tRNA-queuosine biosynthesis. Catalyzes the NADPH-dependent reduction of 7-cyano-7-deazaguanine (preQ0) to 7-aminomethyl-7-deazaguanine (preQ1). This is NADPH-dependent 7-cyano-7-deazaguanine reductase from Nitrosomonas europaea (strain ATCC 19718 / CIP 103999 / KCTC 2705 / NBRC 14298).